Consider the following 419-residue polypeptide: Napsin-A (419 aa).

A signal peptide spans 1-16 (MSPLLLLLLCLLLGNL). The 322-residue stretch at 73 to 394 (YFGTIGLGTP…KNVGPRVGLA (322 aa)) folds into the Peptidase A1 domain. N-linked (GlcNAc...) asparagine glycosylation is present at Asn-85. The active site involves Asp-91. The cysteines at positions 104 and 111 are disulfide-linked. N-linked (GlcNAc...) asparagine glycans are attached at residues Asn-128 and Asn-149. Residues Cys-269 and Cys-273 are joined by a disulfide bond. Asp-278 is an active-site residue. An intrachain disulfide couples Cys-312 to Cys-349. N-linked (GlcNAc...) asparagine glycosylation is present at Asn-331. The segment at 391–419 (VGLARAQSRSTDRAERRTTQAQFFKRRPG) is disordered.

Belongs to the peptidase A1 family. In terms of tissue distribution, expressed at the highest levels in the kidney, at a moderate level in the lung, and at low levels in the spleen and adipose tissue.

It localises to the secreted. Its function is as follows. May be involved in processing of pneumocyte surfactant precursors. This is Napsin-A (Napsa) from Mus musculus (Mouse).